Consider the following 356-residue polypeptide: UDP-N-acetylglucosamine--N-acetylmuramyl-(pentapeptide) pyrophosphoryl-undecaprenol N-acetylglucosamine transferase (356 aa).

Residues 12–14 (TGG), asparagine 124, arginine 163, serine 188, isoleucine 242, and glutamine 287 each bind UDP-N-acetyl-alpha-D-glucosamine.

The protein belongs to the glycosyltransferase 28 family. MurG subfamily.

The protein resides in the cell inner membrane. It catalyses the reaction di-trans,octa-cis-undecaprenyl diphospho-N-acetyl-alpha-D-muramoyl-L-alanyl-D-glutamyl-meso-2,6-diaminopimeloyl-D-alanyl-D-alanine + UDP-N-acetyl-alpha-D-glucosamine = di-trans,octa-cis-undecaprenyl diphospho-[N-acetyl-alpha-D-glucosaminyl-(1-&gt;4)]-N-acetyl-alpha-D-muramoyl-L-alanyl-D-glutamyl-meso-2,6-diaminopimeloyl-D-alanyl-D-alanine + UDP + H(+). It functions in the pathway cell wall biogenesis; peptidoglycan biosynthesis. Its function is as follows. Cell wall formation. Catalyzes the transfer of a GlcNAc subunit on undecaprenyl-pyrophosphoryl-MurNAc-pentapeptide (lipid intermediate I) to form undecaprenyl-pyrophosphoryl-MurNAc-(pentapeptide)GlcNAc (lipid intermediate II). The sequence is that of UDP-N-acetylglucosamine--N-acetylmuramyl-(pentapeptide) pyrophosphoryl-undecaprenol N-acetylglucosamine transferase from Pseudomonas fluorescens (strain Pf0-1).